A 418-amino-acid polypeptide reads, in one-letter code: Pentatricopeptide repeat-containing protein At2g18520, mitochondrial (418 aa).

A mitochondrion-targeting transit peptide spans 1–14; sequence MTSSRLYLRFLRRF. PPR repeat units lie at residues 101-135, 136-166, 173-207, 208-242, 243-276, 277-311, 312-342, and 343-373; these read TETFLSTLIRSYGRASMFDHAMKMFEEMDKLGTPR, TVVSFNALLAACLHSDLFERVPQLFDEFPQR, DKISYGMLIKSYCDSGKPEKAMEIMRDMEVKGVEV, TIIAFTTILGSLYKNGLVDEAESLWIEMVNKGCDL, DNTVYNVRLMNAAKESPERVKELMEEMSSVGLKP, DTVSYNYLMTAYCVKGMMSEAKKVYEGLEQPNAAT, FRTLIFHLCINGLYDQGLTVFKKSAIVHKIP, and DFKTCKHLTEGLVKNNRMEDARGVARIVKKK.

It belongs to the PPR family. P subfamily.

The protein localises to the mitochondrion. In Arabidopsis thaliana (Mouse-ear cress), this protein is Pentatricopeptide repeat-containing protein At2g18520, mitochondrial.